The primary structure comprises 152 residues: Transcription elongation factor Spt5 (152 aa).

The 30-residue stretch at 98 to 127 (EGDLVEVVSGPFRGMQAQVVKVTEGKGEVV) folds into the KOW domain.

This sequence belongs to the archaeal Spt5 family. Heterodimer composed of Spt4 and Spt5. Interacts with RNA polymerase (RNAP).

Functionally, stimulates transcription elongation. The polypeptide is Transcription elongation factor Spt5 (Acidianus ambivalens (Desulfurolobus ambivalens)).